Consider the following 101-residue polypeptide: UPF0213 protein lp_2058 (101 aa).

Residues 15–92 enclose the GIY-YIG domain; it reads KKYYFYVLLC…KHQSRAAKLK (78 aa).

This sequence belongs to the UPF0213 family.

The protein is UPF0213 protein lp_2058 of Lactiplantibacillus plantarum (strain ATCC BAA-793 / NCIMB 8826 / WCFS1) (Lactobacillus plantarum).